The sequence spans 447 residues: MSTMTPAEIVSELDKHIIGQAKAKKAVAVALRNRWRRQQVADPLRQEITPKNILMIGPTGVGKTEIARRLAKLADAPFIKIEATKFTEVGYVGRDVDSIVRDLIEISVKQTREAEMRKVRSKATDQAEDRILDILLPQPRAVGFGGNAEHANDDNNATRQTFRKRLREGQLDDKEVELDLEQPSVGMDIMAPPGMEEMTEQIRSMFSNLGSGKKQRRKVKIKEALKLLTDEEAAKMLNEEEVKTKAVQNVEQNGIVFLDEIDKITSRNNEGSGGEVSRQGVQRDLLPLVEGTTVNTKYGMVKTDHILFIASGAFHLAKPSDLIPELQGRFPIRVELDSLSVNDFEAILVATDASLVKQYQALLATEDVQLEFADDGIRRLAEIAFAVNEKTENIGARRLYTVIEKLLEEVSFSAGNHAGERVTIDAKYVDRALGEVSQDEDLSRYVL.

ATP contacts are provided by residues Ile18, 60–65, Asp259, Glu325, and Arg397; that span reads GVGKTE.

This sequence belongs to the ClpX chaperone family. HslU subfamily. A double ring-shaped homohexamer of HslV is capped on each side by a ring-shaped HslU homohexamer. The assembly of the HslU/HslV complex is dependent on binding of ATP.

It localises to the cytoplasm. Its function is as follows. ATPase subunit of a proteasome-like degradation complex; this subunit has chaperone activity. The binding of ATP and its subsequent hydrolysis by HslU are essential for unfolding of protein substrates subsequently hydrolyzed by HslV. HslU recognizes the N-terminal part of its protein substrates and unfolds these before they are guided to HslV for hydrolysis. The protein is ATP-dependent protease ATPase subunit HslU of Burkholderia cenocepacia (strain ATCC BAA-245 / DSM 16553 / LMG 16656 / NCTC 13227 / J2315 / CF5610) (Burkholderia cepacia (strain J2315)).